Here is a 668-residue protein sequence, read N- to C-terminus: Threonine--tRNA ligase (668 aa).

The TGS domain maps to 1 to 64; the sequence is MSEAIFLTFP…ADGKIEIITR (64 aa). A catalytic region spans residues 245 to 553; the sequence is DHRKLGREMD…LIENFAGHLP (309 aa). Zn(2+)-binding residues include cysteine 347, histidine 398, and histidine 530.

This sequence belongs to the class-II aminoacyl-tRNA synthetase family. In terms of assembly, homodimer. It depends on Zn(2+) as a cofactor.

It is found in the cytoplasm. It carries out the reaction tRNA(Thr) + L-threonine + ATP = L-threonyl-tRNA(Thr) + AMP + diphosphate + H(+). Its function is as follows. Catalyzes the attachment of threonine to tRNA(Thr) in a two-step reaction: L-threonine is first activated by ATP to form Thr-AMP and then transferred to the acceptor end of tRNA(Thr). Also edits incorrectly charged L-seryl-tRNA(Thr). The protein is Threonine--tRNA ligase of Rhizobium leguminosarum bv. trifolii (strain WSM2304).